The sequence spans 946 residues: Probable leucine-rich repeat receptor-like protein kinase At5g49770 (946 aa).

A signal peptide spans Met-1–Ala-25. Residues Phe-26 to Lys-561 lie on the Extracellular side of the membrane. 14 LRR repeats span residues Asp-67–Leu-91, Ser-92–Leu-116, Lys-118–Leu-140, Glu-141–Leu-164, Lys-166–Gly-191, Leu-195–Ser-219, Met-221–Val-244, Gln-245–Leu-268, Thr-269–Ser-293, Tyr-295–Pro-314, Leu-316–Pro-340, Gln-342–Lys-365, Leu-367–Pro-387, and Asn-389–Gly-407. N-linked (GlcNAc...) asparagine glycosylation is found at Asn-246, Asn-267, and Asn-287. N-linked (GlcNAc...) asparagine glycosylation is found at Asn-354 and Asn-362. 4 N-linked (GlcNAc...) asparagine glycosylation sites follow: Asn-415, Asn-460, Asn-489, and Asn-514. A helical membrane pass occupies residues Val-562–Ile-582. The Cytoplasmic portion of the chain corresponds to Tyr-583 to Pro-946. The Protein kinase domain occupies Phe-634–Leu-908. ATP is bound by residues Val-640–Val-648 and Lys-662. Catalysis depends on Asp-758, which acts as the Proton acceptor. A disordered region spans residues Ser-919 to Pro-946.

The protein belongs to the protein kinase superfamily. Ser/Thr protein kinase family.

It is found in the membrane. It carries out the reaction L-seryl-[protein] + ATP = O-phospho-L-seryl-[protein] + ADP + H(+). The enzyme catalyses L-threonyl-[protein] + ATP = O-phospho-L-threonyl-[protein] + ADP + H(+). The sequence is that of Probable leucine-rich repeat receptor-like protein kinase At5g49770 from Arabidopsis thaliana (Mouse-ear cress).